Consider the following 1001-residue polypeptide: TonB-dependent receptor P3 (1001 aa).

A signal peptide spans Met1–Ala26. Positions Glu109–Tyr116 match the TonB box motif. Residues Lys120–Lys232 form the TBDR plug domain. Residues Lys238 to Phe1001 enclose the TBDR beta-barrel domain. The TonB C-terminal box motif lies at Tyr984–Phe1001.

The protein belongs to the TonB-dependent receptor family.

Its subcellular location is the cell outer membrane. Functionally, tonB-dependent receptor probably involved in ulvan degradation. Ulvan is the main polysaccharide component of the Ulvales (green seaweed) cell wall. It is composed of disaccharide building blocks comprising 3-sulfated rhamnose (Rha3S) linked to D-glucuronic acid (GlcA), L-iduronic acid (IduA), or D-xylose (Xyl). The TonB-dependent receptor may mediate transport of ulvan oligosaccharides from the surface of the outer membrane to the periplasm for subsequent degradation. This Formosa agariphila (strain DSM 15362 / KCTC 12365 / LMG 23005 / KMM 3901 / M-2Alg 35-1) protein is TonB-dependent receptor P3.